A 640-amino-acid chain; its full sequence is Preterminal protein (640 aa).

The tract at residues 232 to 257 (PSQEGEGEERENPDRASSRPRPQETV) is disordered. The short motif at 351–360 (RLPVRRRRRR) is the Nuclear localization signal element. Ser549 is subject to O-(5'-phospho-DNA)-serine. The tract at residues 614-640 (GADVPLPAMPPGPEPPLPPGARPRHRF) is disordered. Positions 620–634 (PAMPPGPEPPLPPGA) are enriched in pro residues.

Belongs to the adenoviridae terminal protein family. As to quaternary structure, heterodimer with the polymerase; this heterodimer binds to bp 9 to 18 of the genome. Interacts with host POU2F1; POU2F1 binds to the auxiliary sequences in the inverted terminal repeats and tethers the pTP-POL heterodimer to the origin DNA thereby participating in the assembly of the pre-initiation complex (POL-TP-DBP-NFIA-POU2F1). Preterminal protein is used to replicate viral genome, upon genomic encapsidation it is processed first into iTP and finally into TP by adenovirus protease.

It localises to the host nucleus matrix. Its function is as follows. Protein covalently bound to the viral DNA that acts as a primer for viral genomic replication by DNA strand displacement. Assembles on the viral origin of replication in an initiation complex with viral polymerase, DBP, host NFIA and host POU2F1/OCT1. During initiation, the polymerase covalently couples the first dCTP with Ser-580 of pTP. The terminal protein stimulates the template activity over 20 fold compared to protein-free templates. Neo-synthesized viral genomes are linked to two preterminal proteins, one for each 5' end. These new genomes are encapsidated in the nucleus, and during capsid maturation by viral protease, preterminal protein is first cleaved into intermediary (iTP), then into mature TP. May play a role in host nuclear matrix localization of genomic DNA. This Human adenovirus B serotype 7 (HAdV-7) protein is Preterminal protein.